The primary structure comprises 150 residues: MSLVRRSNVFDPFSLDLWDPFDSVFRSVVPATSDNDTAAFANARIDWKETPESHVFKADLPGVKKEEVKVEVEEGNVLVISGQRSKEKEDKNDKWHRVERSSGQFMRRFRLPENAKVDQVKAGLENGVLTVTVPKAEVKKPEVKAIEISG.

Positions 1-42 (MSLVRRSNVFDPFSLDLWDPFDSVFRSVVPATSDNDTAAFAN) are important for thermostability under elevated temperature. The sHSP domain occupies 36–150 (DTAAFANARI…PEVKAIEISG (115 aa)).

This sequence belongs to the small heat shock protein (HSP20) family. In terms of assembly, forms oligomeric structures.

The protein resides in the cytoplasm. The protein is 16.9 kDa class I heat shock protein 1 (HSP16.9A) of Oryza sativa subsp. japonica (Rice).